We begin with the raw amino-acid sequence, 476 residues long: MDWAEKYRPMHLADILGNGSAVRQIVDWAKTWTPDSRPLLFTGKPGIGKTSAALALARDMDWEVLELNASDARTKTIIERVAGNSSTTTSLFGAGRKLIIIDEVDNLEGNADRGGARAIADILKEAKQPIVLIANDAYGVSDSIRRLCDPVPFRAIGVSTLQKRMKEICRFEDIACGEDALSAIAESSAGDMRTAVNMLFGSSTGKTSISVGDINTAQKDERATIFDLVGGVFAGAPDRELQKLSFECDEKPDSVMQWIEESIPLMHDPKRRIRAYGRISRADVYLGRTMRRQYFTLWRYATSMMTLGVASENAGAGFRTRIMPPSRWKRMSTAKKQKTVRRTLAASLAEGYSIPERQIQSEYLDLLSRFAEKDPAAFCERHNLDVDQMGIILHDKAAAAAAVKTVQQAAKERDMKVKKMAASKKAEMRKLEEQLEALRMQEPPVPETPPAAEEQPLEEPQEEKKLAPKQATLDFF.

ATP is bound at residue 43–50 (GKPGIGKT). Residues 435-476 (LEALRMQEPPVPETPPAAEEQPLEEPQEEKKLAPKQATLDFF) are disordered.

The protein belongs to the activator 1 small subunits family. RfcL subfamily. Heteromultimer composed of small subunits (RfcS) and large subunits (RfcL).

Functionally, part of the RFC clamp loader complex which loads the PCNA sliding clamp onto DNA. This is Replication factor C large subunit from Methanocorpusculum labreanum (strain ATCC 43576 / DSM 4855 / Z).